Here is a 782-residue protein sequence, read N- to C-terminus: HHIP-like protein 1 (782 aa).

The N-terminal stretch at methionine 1–alanine 19 is a signal peptide. Disulfide bonds link cysteine 181–cysteine 521, cysteine 185–cysteine 528, cysteine 399–cysteine 417, and cysteine 484–cysteine 584. Asparagine 234 carries an N-linked (GlcNAc...) asparagine glycan. The disordered stretch occupies residues glutamate 604–arginine 666. Residues threonine 610–arginine 623 show a composition bias toward low complexity. A compositionally biased stretch (pro residues) spans alanine 632 to alanine 642. The region spanning valine 673–serine 776 is the SRCR domain. 3 disulfide bridges follow: cysteine 700–cysteine 765, cysteine 713–cysteine 775, and cysteine 745–cysteine 755.

The protein belongs to the HHIP family.

Its subcellular location is the secreted. The chain is HHIP-like protein 1 (HHIPL1) from Homo sapiens (Human).